Reading from the N-terminus, the 416-residue chain is Counting factor 60 (416 aa).

The N-terminal stretch at 1–22 (MIKKSALITLFLVSLILGVSLS) is a signal peptide. Asparagine 110, asparagine 218, asparagine 231, asparagine 318, and asparagine 411 each carry an N-linked (GlcNAc...) asparagine glycan.

This sequence belongs to the histidine acid phosphatase family. As to quaternary structure, component of the counting factor (CF) complex, which includes cf60, cf50, cf45-1 and ctnA.

It is found in the secreted. In terms of biological role, cell-counting factor that limits the maximum size of the multicellular structure. Does not possess acid phosphatase activity. Cells with decreased levels of this protein form large groups while cells overexpressing this protein form small groups. The polypeptide is Counting factor 60 (cf60) (Dictyostelium discoideum (Social amoeba)).